Consider the following 344-residue polypeptide: Cell division protein ZipA (344 aa).

Residues 1–6 (MEDLQL) lie on the Periplasmic side of the membrane. The chain crosses the membrane as a helical span at residues 7 to 27 (VLFVLGAIAIVAVLVHGFWSI). At 28–344 (RRQQPKSLKD…DYLHRIRANA (317 aa)) the chain is on the cytoplasmic side. Disordered regions lie at residues 75–94 (VRKASESQTPEAPAVNPYLK) and 108–139 (QFKQEPSMAQPDFSLQSPSVDEPHRGTKASRQ).

This sequence belongs to the ZipA family. As to quaternary structure, interacts with FtsZ via their C-terminal domains.

It localises to the cell inner membrane. Essential cell division protein that stabilizes the FtsZ protofilaments by cross-linking them and that serves as a cytoplasmic membrane anchor for the Z ring. Also required for the recruitment to the septal ring of downstream cell division proteins. This chain is Cell division protein ZipA, found in Shewanella oneidensis (strain ATCC 700550 / JCM 31522 / CIP 106686 / LMG 19005 / NCIMB 14063 / MR-1).